Reading from the N-terminus, the 1469-residue chain is ABC transporter G family member 36 (1469 aa).

Met-1 is modified (N-acetylmethionine). 3 positions are modified to phosphoserine: Ser-37, Ser-38, and Ser-40. Position 43 is a phosphothreonine (Thr-43). Ser-45 carries the post-translational modification Phosphoserine. Residues 171-444 enclose the ABC transporter 1 domain; the sequence is LGMIGIQFAK…FESFGFKCPE (274 aa). 204–211 contacts ATP; that stretch reads GPPSSGKT. Residues 522 to 735 enclose the ABC transmembrane type-2 1 domain; it reads ELLKSCWDKE…AFNGLVVNEM (214 aa). A run of 7 helical transmembrane segments spans residues 540 to 560, 575 to 595, 621 to 641, 659 to 679, 685 to 705, 713 to 733, and 772 to 792; these read FFYV…STLF, LYIG…FAEM, LPTF…WMVV, FLLV…IASV, IANT…GFLL, WWGW…LVVN, and ISVG…TLAL. Positions 806–852 are disordered; that stretch reads PEEENEDADQGKDPMRRSLSTADGNRRGEVAMGRMSRDSAAEASGGA. 3 positions are modified to phosphoserine: Ser-825, Ser-841, and Ser-844. Residues 829–845 are compositionally biased toward basic and acidic residues; sequence GNRRGEVAMGRMSRDSA. Residues 867–1119 enclose the ABC transporter 2 domain; it reads MSFDDVKYFV…KVVEYFESFP (253 aa). 912-919 contributes to the ATP binding site; it reads GVSGAGKT. The ABC transmembrane type-2 2 domain occupies 1192–1406; sequence GQFKSCLWKQ…TVYGLIVSQY (215 aa). 7 consecutive transmembrane segments (helical) span residues 1216–1236, 1239–1259, 1299–1319, 1326–1346, 1356–1376, 1384–1404, and 1441–1461; these read FIFT…IGGN, NAGD…FVGI, LPYV…MVGF, FFWF…YGMM, VASI…GFFI, WWIW…LIVS, and PVAA…AFCI.

The protein belongs to the ABC transporter superfamily. ABCG family. PDR (TC 3.A.1.205) subfamily. Interacts, in a Ca(2+)-dependent manner, with calmodulins CaM3, CaM7 and several CaM-like proteins (CML8, CML9, CML12/CAL4, CML37 and CML38), as well as with calcium regulated proteins CBL4/SOS3 and KIC. Phosphorylated upon perception of pathogen-associated molecular patterns (PAMPs); phosphorylations at Ser-40 and Ser-45, which likely regulate transport activity, are required for plant defense against pathogens (e.g. Blumeria graminis), but dispensable for recruitment to the host-pathogen interface and penetration sites. Phosphorylation at Ser-841 seems to be required for protein stability. As to expression, ubiquitous (at protein level). Higher levels in root hairs, stomata, epidermal cells, and hydathodes. Concentrated at the infection site of infected plants, including papillae and haustoria. Accumulates at the periphery of lateral root cap and root epidermal cells, especially in the outer lateral membrane domain facing the environment.

It localises to the cell membrane. It is found in the golgi apparatus. The protein resides in the trans-Golgi network membrane. Its subcellular location is the endoplasmic reticulum membrane. Functionally, together with ABCG37, regulates auxin homeostasis and responses by playing a dual role in coumarin (e.g. esculin) and in the auxin precursor indole 3-butyric acid (IBA) efflux transport, thus influencing cotyledons, roots and root hairs development. Mediates the transport (export into the apoplast) of distinct indole-type metabolites in distinct biological processes; a precursor of 4-O-beta-D-glucosyl-indol-3-yl formamide (4OGlcI3F), a pathogen-inducible tryptophan-derived compound (e.g. upon Blumeria graminis conidiospore inoculation), being a probable substrate in extracellular pathogen defense. Involved in the cellular detoxification of xenobiotics by promoting the excretion of some auxinic herbicides including 4-(2,4-dichlorophenoxy)butyric acid (2,4-DB) and other members of the phenoxyalkanoic acid family but not 2,4-dichlorophenoxyacetic acid (2,4-D). Mediates thymidine exudation in the rhizosphere. May be a transporter of lignin precursors during tracheary element differentiation. Key factor that controls the extent of cell death in the defense response. Necessary for both callose deposition and glucosinolate activation in response to pathogens. As a central component of nonhost resistance (NHR), required for limiting invasion by nonadapted pathogens including powdery mildews (e.g. Blumeria graminis and Erysiphe pisi), root-penetrating pathogenic fungi (e.g. Fusarium oxysporum), Phakopsora pachyrhizi and Colletotrichum gloeosporioides (anthracnose fungi), probably by sensing Ca(2+) via interactions with calmodulins (e.g. CaM7). Confers resistance to cadmium (Cd) and lead (Pb), probably as an efflux pump of Cd2+ or Cd conjugates, and possibly, of chemicals that mediate pathogen resistance. Promotes resistance to abiotic stresses (e.g. drought and salt stress) and favors general growth by preventing sodium accumulation in plants. Required for microbe-associated molecular patterns (MAMPs)- and salicylic acid (SA)-dependent hypersensitive cell death (HR), involving indole glucosinolate breakdown products (e.g. indole-3-acetonitrile), probably in a PEN2 myrosinase-dependent metabolic pathway, triggered by the recognition of effectors from incompatible pathogens including oomycetes and bacteria (e.g. AvrRpm1 and AvrRps4) and benzothiadiazole- (BTH), and leading to an induced protection against pathogens (e.g. Pseudomonas syringae pv. tomato DC3000, Golovinomyces orontii and Hyaloperonospora arabidopsidis). This chain is ABC transporter G family member 36, found in Arabidopsis thaliana (Mouse-ear cress).